The sequence spans 333 residues: Homeobox protein Nkx-3.2 (333 aa).

Disordered stretches follow at residues P74–V121 and D137–A212. Residues D137–S148 are compositionally biased toward basic and acidic residues. Residues G179 to G191 show a composition bias toward gly residues. The segment at residues K206–Q265 is a DNA-binding region (homeobox).

The protein belongs to the NK-3 homeobox family. In terms of tissue distribution, expressed widely in mesoderm at the gastroduodenal junction (at protein level). Expressed in visceral mesoderm and embryonic skeleton. Expression is restricted to immature proliferative chondrocytes during endochondral ossification.

The protein resides in the nucleus. In terms of biological role, transcriptional repressor that acts as a negative regulator of chondrocyte maturation. PLays a role in distal stomach development; required for proper antral-pyloric morphogenesis and development of antral-type epithelium. In concert with GSC, defines the structural components of the middle ear; required for tympanic ring and gonium development and in the regulation of the width of the malleus. The protein is Homeobox protein Nkx-3.2 (Nkx3-2) of Mus musculus (Mouse).